Here is a 274-residue protein sequence, read N- to C-terminus: 2,3,4,5-tetrahydropyridine-2,6-dicarboxylate N-succinyltransferase (274 aa).

Substrate-binding residues include Arg106 and Asp143.

It belongs to the transferase hexapeptide repeat family. In terms of assembly, homotrimer.

Its subcellular location is the cytoplasm. The enzyme catalyses (S)-2,3,4,5-tetrahydrodipicolinate + succinyl-CoA + H2O = (S)-2-succinylamino-6-oxoheptanedioate + CoA. It participates in amino-acid biosynthesis; L-lysine biosynthesis via DAP pathway; LL-2,6-diaminopimelate from (S)-tetrahydrodipicolinate (succinylase route): step 1/3. This chain is 2,3,4,5-tetrahydropyridine-2,6-dicarboxylate N-succinyltransferase, found in Rickettsia akari (strain Hartford).